The following is a 362-amino-acid chain: Solute carrier family 25 member 3 (362 aa).

A mitochondrion-targeting transit peptide spans 1-49 (MFSSVAHLARANPFNTPHLQLVHDGLGDLRSSSPGPTGQPRRPRNLAAA). Residues 50-63 (AVEEQYSCDYGSGR) are Mitochondrial intermembrane-facing. 3 Solcar repeats span residues 63 to 147 (RFFI…FKVL), 160 to 244 (WRTS…TVEA), and 261 to 339 (EQLV…VKVY). Residues 64 to 86 (FFILCGLGGIISCGTTHTALVPL) form a helical membrane-spanning segment. At 87–121 (DLVKCRMQVDPQKYKGIFNGFSVTLKEDGVRGLAK) the chain is on the mitochondrial matrix side. Lysine 99 bears the N6-acetyllysine mark. Lysine 112 is subject to N6-methyllysine. The chain crosses the membrane as a helical span at residues 122–141 (GWAPTFLGYSMQGLCKFGFY). Residues 142–161 (EVFKVLYSNMLGEENTYLWR) are Mitochondrial intermembrane-facing. Residues 162–183 (TSLYLAASASAEFFADIALAPM) traverse the membrane as a helical segment. The Mitochondrial matrix portion of the chain corresponds to 184–218 (EAAKVRIQTQPGYANTLRDAAPKMYKEEGLKAFYK). Tyrosine 196 is modified (phosphotyrosine). An N6-acetyllysine modification is found at lysine 209. A helical transmembrane segment spans residues 219–238 (GVAPLWMRQIPYTMMKFACF). Over 239 to 261 (ERTVEALYKFVVPKPRSECSKPE) the chain is Mitochondrial intermembrane. Residues 262–284 (QLVVTFVAGYIAGVFCAIVSHPA) traverse the membrane as a helical segment. Residues 285 to 314 (DSVVSVLNKEKGSSASLVLKRLGFKGVWKG) are Mitochondrial matrix-facing. A helical membrane pass occupies residues 315–333 (LFARIIMIGTLTALQWFIY). The Mitochondrial intermembrane portion of the chain corresponds to 334-362 (DSVKVYFRLPRPPPPEMPESLKKKLGLTQ).

It belongs to the mitochondrial carrier (TC 2.A.29) family. As to quaternary structure, interacts with PPIF; the interaction is impaired by CsA.

Its subcellular location is the mitochondrion inner membrane. The catalysed reaction is phosphate(in) + H(+)(in) = phosphate(out) + H(+)(out). In terms of biological role, inorganic ion transporter that transports phosphate or copper ions across the mitochondrial inner membrane into the matrix compartment. Mediates proton-coupled symport of phosphate ions necessary for mitochondrial oxidative phosphorylation of ADP to ATP. Transports copper ions probably in the form of anionic copper(I) complexes to maintain mitochondrial matrix copper pool and to supply copper for cytochrome C oxidase complex assembly. May also play a role in regulation of the mitochondrial permeability transition pore (mPTP). In Homo sapiens (Human), this protein is Solute carrier family 25 member 3.